Here is a 402-residue protein sequence, read N- to C-terminus: Probable 2,3-bisphosphoglycerate-independent phosphoglycerate mutase (402 aa).

The protein belongs to the BPG-independent phosphoglycerate mutase family. A-PGAM subfamily.

It carries out the reaction (2R)-2-phosphoglycerate = (2R)-3-phosphoglycerate. It functions in the pathway carbohydrate degradation; glycolysis; pyruvate from D-glyceraldehyde 3-phosphate: step 3/5. In terms of biological role, catalyzes the interconversion of 2-phosphoglycerate and 3-phosphoglycerate. In Thermosipho africanus (strain TCF52B), this protein is Probable 2,3-bisphosphoglycerate-independent phosphoglycerate mutase.